The sequence spans 240 residues: UDP-2,3-diacylglucosamine hydrolase (240 aa).

Mn(2+) contacts are provided by Asp-8, His-10, Asp-41, Asn-78, and His-113. Substrate is bound at residue 78-79 (NR). Asp-121, Ser-159, Asn-163, Lys-166, and His-194 together coordinate substrate. The Mn(2+) site is built by His-194 and His-196.

Belongs to the LpxH family. The cofactor is Mn(2+).

Its subcellular location is the cell inner membrane. The enzyme catalyses UDP-2-N,3-O-bis[(3R)-3-hydroxytetradecanoyl]-alpha-D-glucosamine + H2O = 2-N,3-O-bis[(3R)-3-hydroxytetradecanoyl]-alpha-D-glucosaminyl 1-phosphate + UMP + 2 H(+). The protein operates within glycolipid biosynthesis; lipid IV(A) biosynthesis; lipid IV(A) from (3R)-3-hydroxytetradecanoyl-[acyl-carrier-protein] and UDP-N-acetyl-alpha-D-glucosamine: step 4/6. Its function is as follows. Hydrolyzes the pyrophosphate bond of UDP-2,3-diacylglucosamine to yield 2,3-diacylglucosamine 1-phosphate (lipid X) and UMP by catalyzing the attack of water at the alpha-P atom. Involved in the biosynthesis of lipid A, a phosphorylated glycolipid that anchors the lipopolysaccharide to the outer membrane of the cell. This is UDP-2,3-diacylglucosamine hydrolase from Shewanella baltica (strain OS185).